The primary structure comprises 530 residues: Probable flavin-containing monooxygenase 1 (530 aa).

Residues 17–21 (GAGVS), Glu38, 46–47 (VW), and 58–59 (QS) each bind FAD. 219 to 222 (SAID) provides a ligand contact to NADP(+).

It belongs to the FMO family. FAD serves as cofactor.

Functionally, required for the establishment of systemic acquired resistance (SAR). Not involved in local defense mechanisms. Confers a salicylic acid-dependent (SA) resistance to virulent pathogens such as P.syringae pv tomato and H.parasitica. This is Probable flavin-containing monooxygenase 1 (FMO1) from Arabidopsis thaliana (Mouse-ear cress).